Consider the following 295-residue polypeptide: Aquaporin NIP2-1 (295 aa).

2 helical membrane passes run 49–69 (VVSE…AAGI) and 83–103 (SVAG…ISGA). The short motif at 106–108 (NPA) is the NPA 1 element. Helical transmembrane passes span 124-146 (VPFY…KAVL), 164-184 (SLVI…AVAT), and 192-212 (LAGL…GAVS). Residues 217–219 (NPA) carry the NPA 2 motif. The chain crosses the membrane as a helical span at residues 230-250 (LYTGLWIYFLGPVLGTLSGAW).

It belongs to the MIP/aquaporin (TC 1.A.8) family. NIP (TC 1.A.8.12) subfamily.

The protein localises to the membrane. Functionally, aquaporins facilitate the transport of water and small neutral solutes across cell membranes. This is Aquaporin NIP2-1 (NIP2-1) from Zea mays (Maize).